Consider the following 259-residue polypeptide: MTDTSVQSNTALDNDTTHFGFTTVAKDEKVTKVAEVFHSVAAKYDIMNDLMSGGVHRLWKRFTIDCSGARPGQRVLDLGGGTGDLTAKFSRIVGDQGHVILADINNSMLNVGRDKLRDNGIVGNVHYVQANAEELPFPDDYFDVITISFCLRNVTDKDKALRSMFRVLKPGGRLLVLEFSKPILDPLSKVYDAYSFHLLPKMGELVANDADSYRYLAESIRMHPDQATLEGMMKEAGFENTKYYNLTGGIVALHRGYKF.

Residues Thr82, Asp103, Asn131 to Ala132, and Ser148 contribute to the S-adenosyl-L-methionine site.

Belongs to the class I-like SAM-binding methyltransferase superfamily. MenG/UbiE family.

It catalyses the reaction a 2-demethylmenaquinol + S-adenosyl-L-methionine = a menaquinol + S-adenosyl-L-homocysteine + H(+). It carries out the reaction a 2-methoxy-6-(all-trans-polyprenyl)benzene-1,4-diol + S-adenosyl-L-methionine = a 5-methoxy-2-methyl-3-(all-trans-polyprenyl)benzene-1,4-diol + S-adenosyl-L-homocysteine + H(+). It functions in the pathway quinol/quinone metabolism; menaquinone biosynthesis; menaquinol from 1,4-dihydroxy-2-naphthoate: step 2/2. It participates in cofactor biosynthesis; ubiquinone biosynthesis. Functionally, methyltransferase required for the conversion of demethylmenaquinol (DMKH2) to menaquinol (MKH2) and the conversion of 2-polyprenyl-6-methoxy-1,4-benzoquinol (DDMQH2) to 2-polyprenyl-3-methyl-6-methoxy-1,4-benzoquinol (DMQH2). This is Ubiquinone/menaquinone biosynthesis C-methyltransferase UbiE from Vibrio campbellii (strain ATCC BAA-1116).